Consider the following 279-residue polypeptide: MADS-box transcription factor PHERES 1 (279 aa).

One can recognise an MADS-box domain in the interval 1-60 (MRGKMKLSFIENDSVRKTTFTKRKKGMLKKFNELVTLCGVDACAVIRSPYNSIQEPWPSR).

In terms of assembly, interacts with AGL61/DIANA and AGL62. As to expression, male gametophyte, embryo and endosperm.

It localises to the nucleus. In terms of biological role, probable transcription factor involved in the development of gametophytes and seeds. The protein is MADS-box transcription factor PHERES 1 (PHE1) of Arabidopsis thaliana (Mouse-ear cress).